The chain runs to 632 residues: Biosynthetic arginine decarboxylase (632 aa).

The residue at position 101 (K101) is an N6-(pyridoxal phosphate)lysine. 281–291 (FDVGGGLGVDY) is a substrate binding site.

Belongs to the Orn/Lys/Arg decarboxylase class-II family. SpeA subfamily. The cofactor is Mg(2+). Pyridoxal 5'-phosphate serves as cofactor.

It catalyses the reaction L-arginine + H(+) = agmatine + CO2. The protein operates within amine and polyamine biosynthesis; agmatine biosynthesis; agmatine from L-arginine: step 1/1. In terms of biological role, catalyzes the biosynthesis of agmatine from arginine. The sequence is that of Biosynthetic arginine decarboxylase from Salmonella dublin (strain CT_02021853).